The sequence spans 753 residues: Replication restart protein PriA (753 aa).

A Helicase ATP-binding domain is found at 228–395 (SLVAEQFQTC…LSKKYTLSVL (168 aa)). An ATP-binding site is contributed by 241-248 (GVTGSGKT). The DEAH box signature appears at 337-340 (DEEH). Zn(2+)-binding residues include Cys458, Cys461, Cys467, Cys470, Cys485, Cys488, Cys499, and Cys502. A Helicase C-terminal domain is found at 491 to 646 (RLSKPITSCP…DFPAFYKEEI (156 aa)).

The protein belongs to the helicase family. PriA subfamily. Component of the replication restart primosome. It depends on Zn(2+) as a cofactor.

The catalysed reaction is Couples ATP hydrolysis with the unwinding of duplex DNA by translocating in the 3'-5' direction.. The enzyme catalyses ATP + H2O = ADP + phosphate + H(+). Initiates the restart of stalled replication forks, which reloads the replicative helicase on sites other than the origin of replication. Recognizes and binds to abandoned replication forks and remodels them to uncover a helicase loading site. Promotes assembly of the primosome at these replication forks. The polypeptide is Replication restart protein PriA (Chlamydia trachomatis serovar D (strain ATCC VR-885 / DSM 19411 / UW-3/Cx)).